Reading from the N-terminus, the 561-residue chain is Inner membrane ABC transporter ATP-binding protein YddA (561 aa).

Residues Met-1–Thr-3 are Cytoplasmic-facing. Residues Ile-4–Leu-24 form a helical membrane-spanning segment. Topologically, residues Arg-25–Ser-31 are periplasmic. A helical membrane pass occupies residues Val-32–Leu-52. The region spanning Ile-35–Glu-337 is the ABC transmembrane type-1 domain. Residues Asn-53–Lys-70 lie on the Cytoplasmic side of the membrane. The helical transmembrane segment at Leu-71 to Asn-91 threads the bilayer. Residues Lys-92–Thr-151 are Periplasmic-facing. Residues Leu-152–Leu-172 traverse the membrane as a helical segment. Residues Trp-173–Glu-187 lie on the Cytoplasmic side of the membrane. A helical transmembrane segment spans residues Trp-188 to Phe-208. The Periplasmic portion of the chain corresponds to Thr-209–Ser-290. The helical transmembrane segment at Val-291–Leu-311 threads the bilayer. The Cytoplasmic segment spans residues Met-312–Leu-561. Positions Val-367–Leu-561 constitute an ABC transporter domain. An ATP-binding site is contributed by Gly-400–Thr-407.

Belongs to the ABC transporter superfamily.

It is found in the cell inner membrane. The polypeptide is Inner membrane ABC transporter ATP-binding protein YddA (yddA) (Escherichia coli (strain K12)).